The following is a 318-amino-acid chain: Serpentine receptor class delta-25 (318 aa).

The next 7 helical transmembrane spans lie at Leu5–Ala25, Val38–Met58, His88–Phe108, Ile126–Ile146, Ile176–Ile196, Thr226–Phe246, and Ile258–Val278.

This sequence belongs to the nematode receptor-like protein srd family.

It localises to the membrane. This is Serpentine receptor class delta-25 (srd-25) from Caenorhabditis elegans.